The primary structure comprises 574 residues: Cytochrome P450 4g15 (574 aa).

A disordered region spans residues 288–327 (REREQNGGVDQTPSTAGSDEKDREKDKEKASPVAGLSYGQ). Residues 295–304 (GVDQTPSTAG) are compositionally biased toward polar residues. Basic and acidic residues predominate over residues 305 to 317 (SDEKDREKDKEKA). The heme site is built by E379 and C519.

Belongs to the cytochrome P450 family. It depends on heme as a cofactor. As to expression, expressed in larval brain cortex cells and ring glands and weakly in larval digestive system and adult nervous system.

Its subcellular location is the endoplasmic reticulum membrane. The protein localises to the microsome membrane. Its function is as follows. Probably involved in steroid hormones biosynthesis. In Drosophila melanogaster (Fruit fly), this protein is Cytochrome P450 4g15 (Cyp4g15).